The following is a 335-amino-acid chain: Twinfilin (335 aa).

ADF-H domains lie at 4–140 (SSGI…QHKL) and 176–316 (GISF…NELH). Residues 307–335 (SEESIINELHPPKVEEKKAFSKPSRPGRK) form a disordered region. The span at 316 to 325 (HPPKVEEKKA) shows a compositional bias: basic and acidic residues.

The protein belongs to the actin-binding proteins ADF family. Twinfilin subfamily. As to quaternary structure, interacts with G-actin; ADP-actin form.

Its subcellular location is the cytoplasm. The protein resides in the cytoskeleton. The protein localises to the cell cortex. In terms of biological role, actin-binding protein involved in motile and morphological processes. Inhibits actin polymerization, likely by sequestering G-actin. The sequence is that of Twinfilin (twfA) from Dictyostelium discoideum (Social amoeba).